The following is a 222-amino-acid chain: Phosphoenolpyruvate guanylyltransferase (222 aa).

The phosphoenolpyruvate site is built by Thr147, Gly163, and Ser166.

Belongs to the CofC family.

It catalyses the reaction phosphoenolpyruvate + GTP + H(+) = enolpyruvoyl-2-diphospho-5'-guanosine + diphosphate. Its pathway is cofactor biosynthesis; coenzyme F420 biosynthesis. Its function is as follows. Guanylyltransferase that catalyzes the activation of phosphoenolpyruvate (PEP) as enolpyruvoyl-2-diphospho-5'-guanosine, via the condensation of PEP with GTP. It is involved in the biosynthesis of coenzyme F420, a hydride carrier cofactor. This chain is Phosphoenolpyruvate guanylyltransferase, found in Streptosporangium roseum (strain ATCC 12428 / DSM 43021 / JCM 3005 / KCTC 9067 / NCIMB 10171 / NRRL 2505 / NI 9100).